The primary structure comprises 338 residues: Lipoate-protein ligase A (338 aa).

Residues 29–216 (PATQRVLFLW…AFFAHYGERV (188 aa)) enclose the BPL/LPL catalytic domain. ATP contacts are provided by residues arginine 71, 76–79 (GAVF), and lysine 134. Residue lysine 134 coordinates (R)-lipoate.

The protein belongs to the LplA family. As to quaternary structure, monomer.

It is found in the cytoplasm. The catalysed reaction is L-lysyl-[lipoyl-carrier protein] + (R)-lipoate + ATP = N(6)-[(R)-lipoyl]-L-lysyl-[lipoyl-carrier protein] + AMP + diphosphate + H(+). The protein operates within protein modification; protein lipoylation via exogenous pathway; protein N(6)-(lipoyl)lysine from lipoate: step 1/2. It participates in protein modification; protein lipoylation via exogenous pathway; protein N(6)-(lipoyl)lysine from lipoate: step 2/2. In terms of biological role, catalyzes both the ATP-dependent activation of exogenously supplied lipoate to lipoyl-AMP and the transfer of the activated lipoyl onto the lipoyl domains of lipoate-dependent enzymes. The protein is Lipoate-protein ligase A of Escherichia coli O81 (strain ED1a).